The following is a 281-amino-acid chain: Acetyl-coenzyme A carboxylase carboxyl transferase subunit beta 2 (281 aa).

Positions 26–281 (LLTRCPVCHE…TITQGGHQDV (256 aa)) constitute a CoA carboxyltransferase N-terminal domain. Positions 30, 33, 48, and 51 each coordinate Zn(2+). The C4-type zinc finger occupies 30-51 (CPVCHEDCYTQDLGEFKVCPHC).

The protein belongs to the AccD/PCCB family. As to quaternary structure, acetyl-CoA carboxylase is a heterohexamer composed of biotin carboxyl carrier protein (AccB), biotin carboxylase (AccC) and two subunits each of ACCase subunit alpha (AccA) and ACCase subunit beta (AccD). The cofactor is Zn(2+).

The protein localises to the cytoplasm. The catalysed reaction is N(6)-carboxybiotinyl-L-lysyl-[protein] + acetyl-CoA = N(6)-biotinyl-L-lysyl-[protein] + malonyl-CoA. Its pathway is lipid metabolism; malonyl-CoA biosynthesis; malonyl-CoA from acetyl-CoA: step 1/1. Component of the acetyl coenzyme A carboxylase (ACC) complex. Biotin carboxylase (BC) catalyzes the carboxylation of biotin on its carrier protein (BCCP) and then the CO(2) group is transferred by the transcarboxylase to acetyl-CoA to form malonyl-CoA. The protein is Acetyl-coenzyme A carboxylase carboxyl transferase subunit beta 2 of Lactiplantibacillus plantarum (strain JDM1) (Lactobacillus plantarum).